We begin with the raw amino-acid sequence, 409 residues long: Phospholipase ABHD3 (409 aa).

The chain crosses the membrane as a helical; Signal-anchor for type II membrane protein span at residues 26-46 (GFFGSGVGLSLILGFSVAYAF). The AB hydrolase-1 domain occupies 140–233 (PTILLLPGLT…MLLLNYLGKI (94 aa)). Residues Ser220, Asp346, and His375 each act as charge relay system in the active site.

Belongs to the AB hydrolase superfamily. AB hydrolase 4 family.

It localises to the membrane. The catalysed reaction is a 1,2-diacyl-sn-glycero-3-phosphocholine + H2O = a 1-acyl-sn-glycero-3-phosphocholine + a fatty acid + H(+). The enzyme catalyses a 1,2-diacyl-sn-glycero-3-phosphocholine + H2O = a 2-acyl-sn-glycero-3-phosphocholine + a fatty acid + H(+). It catalyses the reaction 1-tetradecanoyl-2-(9Z,12Z-octadecadienoyl)-sn-glycero-3-phosphocholine + H2O = 2-(9Z,12Z-octadecadienoyl)-sn-glycero-3-phosphocholine + tetradecanoate + H(+). It carries out the reaction 1-tetradecanoyl-2-(9Z,12Z-octadecadienoyl)-sn-glycero-3-phosphocholine + H2O = 1-tetradecanoyl-sn-glycero-3-phosphocholine + (9Z,12Z)-octadecadienoate + H(+). The catalysed reaction is 1-tetradecanoyl-2-(5Z,8Z,11Z,14Z-eicosatetraenoyl)-sn-glycero-3-phosphocholine + H2O = 2-(5Z,8Z,11Z,14Z)-eicosatetraenoyl-sn-glycero-3-phosphocholine + tetradecanoate + H(+). The enzyme catalyses 1-tetradecanoyl-2-(4Z,7Z,10Z,13Z,16Z,19Z-docosahexaenoyl)-sn-glycero-3-phosphocholine + H2O = 2-(4Z,7Z,10Z,13Z,16Z,19Z-docosahexaenoyl)-sn-glycero-3-phosphocholine + tetradecanoate + H(+). It catalyses the reaction 1,2-ditetradecanoyl-sn-glycero-3-phosphocholine + H2O = 2-tetradecanoyl-sn-glycero-3-phosphocholine + tetradecanoate + H(+). It carries out the reaction 1-octadecanoyl-2-acetyl-sn-glycero-3-phosphocholine + H2O = 1-octadecanoyl-sn-glycero-3-phosphocholine + acetate + H(+). The catalysed reaction is 1,2-ditetradecanoyl-sn-glycero-3-phosphocholine + H2O = 1-tetradecanoyl-sn-glycero-3-phosphocholine + tetradecanoate + H(+). The enzyme catalyses 1-octadecanoyl-2-pentanoyl-sn-glycero-3-phosphocholine + H2O = pentanoate + 1-octadecanoyl-sn-glycero-3-phosphocholine + H(+). It catalyses the reaction 1-octadecanoyl-2-hexanoyl-sn-glycero-3-phosphocholine + H2O = hexanoate + 1-octadecanoyl-sn-glycero-3-phosphocholine + H(+). It carries out the reaction 1-octadecanoyl-2-octanoyl-sn-glycero-3-phosphocholine + H2O = 1-octadecanoyl-sn-glycero-3-phosphocholine + octanoate + H(+). The catalysed reaction is 1-octadecanoyl-2-nonanoyl-sn-glycero-3-phosphocholine + H2O = nonanoate + 1-octadecanoyl-sn-glycero-3-phosphocholine + H(+). The enzyme catalyses 1-O-hexadecyl-2-nonadioyl-sn-glycero-3-phosphocholine + H2O = nonanedioate + 1-O-hexadecyl-sn-glycero-3-phosphocholine + H(+). It catalyses the reaction 1-hexadecanoyl-2-nonadioyl-sn-glycero-3-phosphocholine + H2O = nonanedioate + 1-hexadecanoyl-sn-glycero-3-phosphocholine + H(+). It carries out the reaction 1-hexadecanoyl-2-(9-oxononanoyl)-sn-glycero-3-phosphocholine + H2O = 9-oxononanoate + 1-hexadecanoyl-sn-glycero-3-phosphocholine + H(+). The catalysed reaction is 1-hexadecanoyl-2-(5-oxopentanoyl)-sn-glycero-3-phosphocholine + H2O = 5-oxopentanoate + 1-hexadecanoyl-sn-glycero-3-phosphocholine + H(+). The enzyme catalyses 1-hexadecanoyl-2-glutaroyl-sn-glycero-3-phosphocholine + H2O = glutarate + 1-hexadecanoyl-sn-glycero-3-phosphocholine + H(+). It catalyses the reaction 1-O-hexadecyl-2-acetyl-sn-glycero-3-phosphocholine + H2O = 1-O-hexadecyl-sn-glycero-3-phosphocholine + acetate + H(+). Phospholipase that may play a role in phospholipids remodeling. May selectively cleave myristate (C14)-containing phosphatidylcholines through its predominant phospholipase 1 activity, cleaving preferentially acyl groups in sn1 position. In parallel, may have a minor phospholipase 2 activity acting on acyl groups in position sn2. In addition to (C14)-containing phosphatidylcholines, may also act on other medium-chain-containing and oxidatively truncated phospholipids. This chain is Phospholipase ABHD3, found in Homo sapiens (Human).